The sequence spans 377 residues: Alanine racemase (377 aa).

Lys37 (proton acceptor; specific for D-alanine) is an active-site residue. N6-(pyridoxal phosphate)lysine is present on Lys37. Arg135 provides a ligand contact to substrate. Tyr271 functions as the Proton acceptor; specific for L-alanine in the catalytic mechanism. Met319 is a binding site for substrate.

The protein belongs to the alanine racemase family. The cofactor is pyridoxal 5'-phosphate.

It carries out the reaction L-alanine = D-alanine. It participates in amino-acid biosynthesis; D-alanine biosynthesis; D-alanine from L-alanine: step 1/1. Its function is as follows. Catalyzes the interconversion of L-alanine and D-alanine. May also act on other amino acids. This Helicobacter pylori (strain G27) protein is Alanine racemase (alr).